We begin with the raw amino-acid sequence, 518 residues long: Calcium-dependent protein kinase 1 (518 aa).

Residues 1–10 (MGNRTSRHHR) are compositionally biased toward basic residues. The interval 1 to 49 (MGNRTSRHHRAAPEQPPPQPKPKPQPQQQQQQWPRPQQPTPPPAAAPDA) is disordered. A lipid anchor (N-myristoyl glycine) is attached at Gly-2. A compositionally biased stretch (pro residues) spans 14–25 (EQPPPQPKPKPQ). Residues 26–35 (PQQQQQQWPR) are compositionally biased toward low complexity. Pro residues predominate over residues 36–45 (PQQPTPPPAA). Residues 66–324 (YTFGRELGRG…SAEILNHPWI (259 aa)) form the Protein kinase domain. ATP is bound by residues 72–80 (LGRGQFGVT) and Lys-95. Asp-190 (proton acceptor) is an active-site residue. The autoinhibitory domain stretch occupies residues 330 to 360 (APDKPLDITVISRMKQFRAMNKLKKVALKVV). EF-hand domains follow at residues 367–402 (EEITGLKEMFRSLDTDNSGTITLEELRSGLPKLGTK), 403–438 (ISESEIRQLMEAADVDGNGTIDYAEFISATMHMNRL), 439–474 (EKEDHILKAFEYFDKDHSGYITVDELEEALKKYDMG), and 475–509 (DDKTIKEIIAEVDTDHDGRINYQEFVAMMRNNNPE). Positions 380, 382, 384, 386, 391, 416, 418, 420, 422, 427, 452, 454, 456, 458, 463, 487, 489, 491, 493, and 498 each coordinate Ca(2+).

The protein belongs to the protein kinase superfamily. Ser/Thr protein kinase family. CDPK subfamily. Expressed in roots and leaf blades.

It localises to the membrane. It carries out the reaction L-seryl-[protein] + ATP = O-phospho-L-seryl-[protein] + ADP + H(+). The catalysed reaction is L-threonyl-[protein] + ATP = O-phospho-L-threonyl-[protein] + ADP + H(+). With respect to regulation, activated by calcium. Autophosphorylation may play an important role in the regulation of the kinase activity. Its function is as follows. May play a role in signal transduction pathways that involve calcium as a second messenger. The polypeptide is Calcium-dependent protein kinase 1 (Oryza sativa subsp. japonica (Rice)).